The chain runs to 464 residues: Septin homolog spn5 (464 aa).

Positions 28-91 (QVDESSAKRS…VPNSNGKSIP (64 aa)) are disordered. Basic and acidic residues-rich tracts occupy residues 41–54 (ESRK…KEQI) and 69–81 (TAKD…KQDE). Positions 115–370 (NGIDINLIVV…DTFRTEKLVA (256 aa)) constitute a Septin-type G domain. Residues 125–132 (GESSLGKT) are G1 motif. GTP-binding positions include 125–132 (GESSLGKT), T151, G177, 257–265 (KADTMTSDE), G304, and R319. Residues 174-177 (DTPG) form a G3 motif region. The G4 motif stretch occupies residues 256 to 259 (GKAD). The stretch at 396–453 (LVEEALTKVMKEKYREKENNLELLETNLKTHHKDYKHALKKRITALEEEKNRLIKEIG) forms a coiled coil.

This sequence belongs to the TRAFAC class TrmE-Era-EngA-EngB-Septin-like GTPase superfamily. Septin GTPase family. In terms of assembly, component of the sporulation-specific septin complex composed of at least spn2, spn5, spn6 and spn7.

It is found in the nucleus. Its subcellular location is the forespore membrane. Septin-like protein involved in the correct orientation of forespore membrane extension during sporulation. This chain is Septin homolog spn5 (spn5), found in Schizosaccharomyces pombe (strain 972 / ATCC 24843) (Fission yeast).